The chain runs to 375 residues: Putative ZDHHC-type palmitoyltransferase 8 (375 aa).

Transmembrane regions (helical) follow at residues 4-24 (LFDF…TDFL) and 40-60 (VVGM…VSLW). An N-linked (GlcNAc...) asparagine glycan is attached at asparagine 95. Helical transmembrane passes span 105–125 (ITFY…YYYY), 221–241 (FILF…LSFF), and 285–305 (YSFI…ILLF). Residues 176 to 226 (VSDGKWSTINKPKSHHCRICKRCIDSMDHHCPFAANCIGINNHHYFILFIG) form the DHHC domain. Asparagine 343 is a glycosylation site (N-linked (GlcNAc...) asparagine).

The protein belongs to the DHHC palmitoyltransferase family.

It is found in the membrane. It catalyses the reaction L-cysteinyl-[protein] + hexadecanoyl-CoA = S-hexadecanoyl-L-cysteinyl-[protein] + CoA. This is Putative ZDHHC-type palmitoyltransferase 8 from Dictyostelium discoideum (Social amoeba).